A 239-amino-acid polypeptide reads, in one-letter code: Pathogenesis-related protein 5 (239 aa).

The N-terminal stretch at methionine 1–alanine 23 is a signal peptide. Intrachain disulfides connect cysteine 32–cysteine 238, cysteine 79–cysteine 89, cysteine 94–cysteine 99, cysteine 146–cysteine 228, cysteine 151–cysteine 211, cysteine 159–cysteine 174, cysteine 178–cysteine 187, and cysteine 188–cysteine 198.

This sequence belongs to the thaumatin family.

It localises to the secreted. Its subcellular location is the extracellular space. The protein resides in the apoplast. Its function is as follows. Partially responsible for acquired pathogen resistance. This is Pathogenesis-related protein 5 from Arabidopsis thaliana (Mouse-ear cress).